The following is a 92-amino-acid chain: Secreted RxLR effector protein RXLR-C02 (92 aa).

The signal sequence occupies residues 1–21 (MQFHLLVMTTIAASFAATGSA). Positions 48 to 51 (RALR) match the RxLR motif. The tract at residues 54–75 (ENRGLIGDDSDSSISDSDSEAK) is disordered.

Belongs to the RxLR effector family.

The protein resides in the secreted. Its subcellular location is the host cytoplasm. It is found in the host nucleus. Its function is as follows. Secreted effector that suppresses pattern-triggered immunity (PTI) in plant host. The chain is Secreted RxLR effector protein RXLR-C02 from Plasmopara halstedii (Downy mildew of sunflower).